The sequence spans 385 residues: Phosphotransferase FrzJ (385 aa).

Residues Asn38 and Lys59 each contribute to the ATP site. Residue Asp245 is part of the active site.

Belongs to the methylthioribose kinase family. In terms of assembly, monomer.

The enzyme catalyses (1S,3S,6S,7S,8S,9S)-6-[(4-methoxyphenyl)methyl]-3-(methylamino)-5-azatricyclo[6.3.1.0(1,5)]dodecane-7,9-diol + ATP = (-)-FR901483 + ADP + 2 H(+). The protein operates within secondary metabolite biosynthesis. Its function is as follows. Phosphotransferase; part of the gene cluster that mediates the biosynthesis of the alkaloid (-)-FR901483, a potent immunosuppressant that shows efficacy in animal models and a probable inhibitor of purine nucleotide biosynthesis by targeting phosphoribosylpyrophosphate amidotransferase (PPAT). FrzJ catalyzes the last step of the pathway by phosphorylating the C4'-OH of dephospho-(-)-FR901483 to produce (-)-FR901483. The biosynthesis of (-)-FR901483 starts with the condensation of two L-tyrosines to yield (S,S)-dityrosyl-piperazine. This process occurs in 3 steps with the non-canonical nonribosomal peptide synthetase FrzA catalyzing the reduction of L-tyrosine into L-tyrosinal, the spontaneous condensation of 2 L-tyrosinal units, and the subsequent reduction by the NmrA-like family domain-containing oxidoreductase FrzB. The cytochrome P450 monooxygenase FrzC then performs coupling between N10 and C1' to morph the piperazine into a 1,4-diazabicyclo[3.2.1]octane spiro-fused to a 2,5-cyclohexadienone. The dienone portion is further reduced to cyclohexanone by the flavin-dependent reductase FrzD. The methyltranserases (MTs) FrzE and FrzF are then involved in the methylation at the C10' amine and the C4 phenolic oxygen, respectively. The order of the two MTs appear to be interchangeable. Cleavage of the C9-N10' bond by the dioxygenase FrzG then leads to formation of a conjugated iminium. In addition to the oxidation of C9, an additional dehydrogenation between C7 and C8 can occur to give a likely shunt product. The next biosynthetic step is the intramolecular aldol condensation catalyzed by the newly identified aldolase FrzH to yield an aza-tricyclic product with the formation of a C9-C3' bond. The short-chain dehydrogenase/reductase FrzI then produces dephospho-(-)-FR901483 that is phosphorylated at C4'-OH into (-)-FR901483 by the phosphotransferase FrzJ. This Cladobotryum sp protein is Phosphotransferase FrzJ.